Consider the following 508-residue polypeptide: U4/U6 small nuclear ribonucleoprotein Prp31 (508 aa).

The segment at 1–45 (MSLADELLADLEEAGEEDGLYPGGEEGESDGEPGERQVDGGLEDI) is disordered. Positions 7–32 (LLADLEEAGEEDGLYPGGEEGESDGE) are enriched in acidic residues. Coiled coils occupy residues 96 to 131 (EADP…KYSK) and 192 to 226 (DDEL…MSFI). One can recognise a Nop domain in the interval 226–344 (IAPNLSIIVG…IERKFDKWQE (119 aa)). 2 disordered regions span residues 345 to 368 (PPPV…RGGR) and 442 to 461 (QSMT…GTSS). A Nuclear localization signal (NLS) motif is present at residues 362–375 (RKKRGGRRYRKMKE).

It belongs to the PRP31 family. As to quaternary structure, identified in the spliceosome B complex. Component of the U4/U6-U5 tri-snRNP complex. Component of some MLL1/MLL complex.

It is found in the nucleus. The protein localises to the nucleus speckle. Its subcellular location is the cajal body. Its function is as follows. Involved in pre-mRNA splicing as component of the spliceosome. Required for the assembly of the U4/U5/U6 tri-snRNP complex, one of the building blocks of the spliceosome. This chain is U4/U6 small nuclear ribonucleoprotein Prp31 (prpf31), found in Danio rerio (Zebrafish).